A 105-amino-acid polypeptide reads, in one-letter code: Large ribosomal subunit protein uL23 (105 aa).

It belongs to the universal ribosomal protein uL23 family. As to quaternary structure, part of the 50S ribosomal subunit. Contacts protein L29, and trigger factor when it is bound to the ribosome.

Its function is as follows. One of the early assembly proteins it binds 23S rRNA. One of the proteins that surrounds the polypeptide exit tunnel on the outside of the ribosome. Forms the main docking site for trigger factor binding to the ribosome. This chain is Large ribosomal subunit protein uL23, found in Herminiimonas arsenicoxydans.